Here is a 983-residue protein sequence, read N- to C-terminus: Eukaryotic translation initiation factor 4E transporter (983 aa).

The interval M1–T22 is disordered. S4 carries the post-translational modification Phosphoserine. Residues Y29 to L35 carry the YXXXXLphi motif motif. Positions R40–D99 are disordered. A compositionally biased stretch (basic and acidic residues) spans E52–H66. A phosphoserine mark is found at S73 and S77. Positions S81–D99 are enriched in basic and acidic residues. Phosphoserine is present on residues S114, S119, S135, and S137. An interaction with CSDE1 region spans residues V130–I160. Residues R194–N210 carry the Nuclear localization signal motif. The interval E206 to S229 is disordered. An interaction with DDX6 region spans residues P218–D239. 4 positions are modified to phosphoserine: S300, S344, S352, and S373. The tract at residues S341–E360 is disordered. Over residues S344–S355 the composition is skewed to low complexity. K409 participates in a covalent cross-link: Glycyl lysine isopeptide (Lys-Gly) (interchain with G-Cter in SUMO2). S416 bears the Phosphoserine mark. The Nuclear export signal motif lies at V437–V446. Residues D447–T489 are interaction with LSM14A. At K485 the chain carries N6-acetyllysine. Phosphoserine occurs at positions 563 and 586. 4 disordered regions span residues P585–M616, F642–P693, R708–T800, and L906–V951. The Nuclear export signal motif lies at V612–V637. Residues Q651–R660 are compositionally biased toward basic and acidic residues. Position 692 is a phosphoserine (S692). The tract at residues S694 to K712 is interaction with PATL1. Basic and acidic residues predominate over residues D724–E734. Composition is skewed to polar residues over residues E735–R774 and G910–S928. Residues S751, S919, and S949 each carry the phosphoserine modification. Positions Q938–Q983 are interaction with LSM14A.

The protein belongs to the 4E-T/EIF4E-T family. Interacts (via YXXXXLphi motif) with EIF4E. Interacts (via YXXXXLphi motif) with EIF4E2. Interacts with DDX6. Interacts with CSDE1/UNR. Interacts with CNOT1; promoting association with the CCR4-NOT complex. Interacts with LSM14A; promoting EIF4ENIF1 localization to P-bodies. Interacts with PATL1. Interacts with importin beta only in the presence of importin alpha, suggesting a direct interaction with importin alpha. Interacts with APOBEC3G in an RNA-dependent manner. Phosphorylation by MAPK8/JNK1 and or MAPK9/JNK2 in response to oxidative stress promotes P-body assembly. Phosphorylated during meiotic maturation. As to expression, highly expressed in developing oocytes.

Its subcellular location is the cytoplasm. The protein resides in the nucleus. It localises to the PML body. The protein localises to the nucleus speckle. Its function is as follows. EIF4E-binding protein that regulates translation and stability of mRNAs in processing bodies (P-bodies). Plays a key role in P-bodies to coordinate the storage of translationally inactive mRNAs in the cytoplasm and prevent their degradation. Acts as a binding platform for multiple RNA-binding proteins: promotes deadenylation of mRNAs via its interaction with the CCR4-NOT complex, and blocks decapping via interaction with eIF4E (EIF4E and EIF4E2), thereby protecting deadenylated and repressed mRNAs from degradation. Component of a multiprotein complex that sequesters and represses translation of proneurogenic factors during neurogenesis. Promotes miRNA-mediated translational repression. Involved in mRNA translational repression mediated by the miRNA effector TNRC6B by protecting TNRC6B-targeted mRNAs from decapping and subsequent decay. Required for the formation of P-bodies. Also acts as a nucleoplasmic shuttling protein, which mediates the nuclear import of EIF4E and DDX6 by a piggy-back mechanism. This chain is Eukaryotic translation initiation factor 4E transporter, found in Mus musculus (Mouse).